A 603-amino-acid polypeptide reads, in one-letter code: ATP-dependent lipid A-core flippase (603 aa).

Helical transmembrane passes span 20–40, 79–99, 170–190, and 269–289; these read LGYVKPYIGMFLLSIVGFLIF, LVYAVPLLIILIAAWQGLGSF, VFLFLYLLWMNWKLTLVMLAI, and PMLQLVIYVAMAILMFLVLWL. Residues 31–324 form the ABC transmembrane type-1 domain; it reads LLSIVGFLIF…LSEVSSTVQR (294 aa). The ABC transporter domain maps to 356–592; that stretch reads LEVRNLSFRY…NGHYARLHAM (237 aa). Position 390–397 (390–397) interacts with ATP; the sequence is GRSGSGKS.

Belongs to the ABC transporter superfamily. Lipid exporter (TC 3.A.1.106) family. Homodimer.

The protein resides in the cell inner membrane. The catalysed reaction is ATP + H2O + lipid A-core oligosaccharideSide 1 = ADP + phosphate + lipid A-core oligosaccharideSide 2.. Functionally, involved in lipopolysaccharide (LPS) biosynthesis. Translocates lipid A-core from the inner to the outer leaflet of the inner membrane. Transmembrane domains (TMD) form a pore in the inner membrane and the ATP-binding domain (NBD) is responsible for energy generation. This is ATP-dependent lipid A-core flippase from Pseudomonas aeruginosa (strain ATCC 15692 / DSM 22644 / CIP 104116 / JCM 14847 / LMG 12228 / 1C / PRS 101 / PAO1).